A 326-amino-acid polypeptide reads, in one-letter code: Aspartate carbamoyltransferase catalytic subunit (326 aa).

Arg55 and Thr56 together coordinate carbamoyl phosphate. Lys83 contacts L-aspartate. Residues Arg105, His135, and Gln138 each coordinate carbamoyl phosphate. Residues Arg176 and Arg230 each coordinate L-aspartate. Positions 271 and 272 each coordinate carbamoyl phosphate.

It belongs to the aspartate/ornithine carbamoyltransferase superfamily. ATCase family. Heterododecamer (2C3:3R2) of six catalytic PyrB chains organized as two trimers (C3), and six regulatory PyrI chains organized as three dimers (R2).

The enzyme catalyses carbamoyl phosphate + L-aspartate = N-carbamoyl-L-aspartate + phosphate + H(+). The protein operates within pyrimidine metabolism; UMP biosynthesis via de novo pathway; (S)-dihydroorotate from bicarbonate: step 2/3. Catalyzes the condensation of carbamoyl phosphate and aspartate to form carbamoyl aspartate and inorganic phosphate, the committed step in the de novo pyrimidine nucleotide biosynthesis pathway. The sequence is that of Aspartate carbamoyltransferase catalytic subunit from Streptomyces coelicolor (strain ATCC BAA-471 / A3(2) / M145).